The chain runs to 828 residues: Conserved oligomeric Golgi complex subunit 3 (828 aa).

Position 2 is an N-acetylalanine (Ala-2). Positions Asp-504–Thr-543 are disordered. Over residues Ser-525–Thr-543 the composition is skewed to polar residues. Phosphoserine is present on Ser-663.

Belongs to the COG3 family. Component of the conserved oligomeric Golgi complex which is composed of eight different subunits and is required for normal Golgi morphology and localization. Interacts with TMEM115. As to expression, widely expressed with highest levels in pancreas and testis and lowest levels in lung.

The protein resides in the golgi apparatus. Its subcellular location is the golgi stack membrane. Its function is as follows. Involved in ER-Golgi transport. Also involved in retrograde (Golgi to ER) transport. The chain is Conserved oligomeric Golgi complex subunit 3 (COG3) from Homo sapiens (Human).